We begin with the raw amino-acid sequence, 367 residues long: UDP-N-acetylglucosamine--N-acetylmuramyl-(pentapeptide) pyrophosphoryl-undecaprenol N-acetylglucosamine transferase (367 aa).

UDP-N-acetyl-alpha-D-glucosamine-binding positions include 13 to 15 (TGG), Arg-168, Ser-196, Ile-252, and Gln-297.

Belongs to the glycosyltransferase 28 family. MurG subfamily.

It is found in the cell inner membrane. It catalyses the reaction di-trans,octa-cis-undecaprenyl diphospho-N-acetyl-alpha-D-muramoyl-L-alanyl-D-glutamyl-meso-2,6-diaminopimeloyl-D-alanyl-D-alanine + UDP-N-acetyl-alpha-D-glucosamine = di-trans,octa-cis-undecaprenyl diphospho-[N-acetyl-alpha-D-glucosaminyl-(1-&gt;4)]-N-acetyl-alpha-D-muramoyl-L-alanyl-D-glutamyl-meso-2,6-diaminopimeloyl-D-alanyl-D-alanine + UDP + H(+). It functions in the pathway cell wall biogenesis; peptidoglycan biosynthesis. Functionally, cell wall formation. Catalyzes the transfer of a GlcNAc subunit on undecaprenyl-pyrophosphoryl-MurNAc-pentapeptide (lipid intermediate I) to form undecaprenyl-pyrophosphoryl-MurNAc-(pentapeptide)GlcNAc (lipid intermediate II). The chain is UDP-N-acetylglucosamine--N-acetylmuramyl-(pentapeptide) pyrophosphoryl-undecaprenol N-acetylglucosamine transferase from Methylibium petroleiphilum (strain ATCC BAA-1232 / LMG 22953 / PM1).